Reading from the N-terminus, the 1699-residue chain is Eukaryotic translation initiation factor 2-alpha kinase gcn-2 (1699 aa).

The 117-residue stretch at 22 to 138 (EEKLALDAVY…HRVREFLTDH (117 aa)) folds into the RWD domain. 2 Protein kinase domains span residues 108 to 507 (LTIL…DVVL) and 508 to 999 (VRNK…DEDL). ATP is bound by residues 114 to 122 (MADTWEGCV), Lys154, 497 to 505 (LGRGGFGDV), and Lys520. Disordered regions lie at residues 572-615 (DSSL…SLMP) and 632-725 (KEWS…SVFE). The segment covering 669-706 (SSDDEDDDDSSEIDWDAESEEVEDEESDDSDEEDEDDG) has biased composition (acidic residues). Polar residues predominate over residues 711-720 (QLNTETSTGA). The active-site Proton acceptor is the Asp829.

The protein belongs to the protein kinase superfamily. Ser/Thr protein kinase family. GCN2 subfamily.

It catalyses the reaction L-seryl-[protein] + ATP = O-phospho-L-seryl-[protein] + ADP + H(+). The catalysed reaction is L-threonyl-[protein] + ATP = O-phospho-L-threonyl-[protein] + ADP + H(+). In terms of biological role, serine/threonine-protein kinase which phosphorylates the alpha subunit of eukaryotic translation-initiation factor 2 (eIF2alpha), leading to its inactivation and thus to a rapid reduction of translational initiation and repression of global protein synthesis. Involved in the unfolded protein response (UPR) triggered by several stresses including mitochondrial, osmotic and oxidative stresses, amino acid deprivation and UV irradiation, probably by phosphorylating and inhibiting eIF2alpha. In addition, leads to the selective translation/transcription of some mRNA including atf-5, pha-4 and gpdh-1 which are part of the UPR. Required for maintaining lifespan during amino acid starvation. Involved in hypoxia-mediated adaptive protective response. This is Eukaryotic translation initiation factor 2-alpha kinase gcn-2 from Caenorhabditis elegans.